Reading from the N-terminus, the 592-residue chain is Solute carrier family 13 member 2 (592 aa).

Transmembrane regions (helical) follow at residues 13-33 (SYLIVFFVPILLLPLPILVPS), 53-73 (ALPLAVTALFPLILFPMMGIV), 86-106 (SNLLFFGGLLVAIAVEHWNLH), and 114-134 (LLIVGVRPAPLILGFMLVTAF). Over residues 165–177 (SSNVEEGSNNPTF) the composition is skewed to polar residues. The disordered stretch occupies residues 165 to 185 (SSNVEEGSNNPTFELQEPSPQ). 8 helical membrane passes run 221-241 (MSLCVCYSASIGGIATLTGTA), 274-294 (MVILLLLAWLWLQILFLGFNF), 324-344 (PMTFAEKAISILFVILVLLWF), 371-391 (GTVAIFIGIIMFIIPSKFPGL), 450-470 (PLQSVPAPAIAIILSLLVATF), 482-502 (IFLPILASMAQAICLHPLYVM), 511-531 (LAFMLPVATPPNAIVFSFGDL), and 545-565 (IIGVLIIALAINSWGIPLFSL).

It belongs to the SLC13A/DASS transporter (TC 2.A.47) family. NADC subfamily. As to expression, expressed in kidney and intestine. In kidney expressed in the proximal tubule (at protein level).

The protein resides in the apical cell membrane. It carries out the reaction succinate(out) + 3 Na(+)(out) = succinate(in) + 3 Na(+)(in). The catalysed reaction is fumarate(out) + 3 Na(+)(out) = fumarate(in) + 3 Na(+)(in). The enzyme catalyses 2-oxoglutarate(out) + 3 Na(+)(out) = 2-oxoglutarate(in) + 3 Na(+)(in). Li(+) decreases succinate transport in the presence of Na(+), by competing at one of the three cation binding sites. In terms of biological role, low-affinity sodium-dicarboxylate cotransporter, that mediates the entry of citric acid cycle intermediates, such as succinate, citrate, fumarate and alpha-ketoglutarate (2-oxoglutarate) into the small intestine and renal proximal tubule. Transports the dicarboxylate into the cell with a probable stoichiometry of 3 Na(+) for 1 divalent dicarboxylate, rendering the process electrogenic. Citrate is transported in protonated form as a divalent anion, rather than the trivalent form which is normally found in blood. Has a critical role in renal dicarboxylate transport. The sequence is that of Solute carrier family 13 member 2 (SLC13A2) from Homo sapiens (Human).